A 220-amino-acid polypeptide reads, in one-letter code: Pyridoxine/pyridoxamine 5'-phosphate oxidase (220 aa).

FMN-binding positions include 49–54 (RMVLLK), 68–69 (YT), lysine 75, and glutamine 97. Lysine 54 contacts substrate. 3 residues coordinate substrate: tyrosine 115, arginine 119, and serine 123. Residues 132–133 (QS) and tryptophan 176 contribute to the FMN site. 182-184 (RLH) lines the substrate pocket. Position 186 (arginine 186) interacts with FMN.

This sequence belongs to the pyridoxamine 5'-phosphate oxidase family. In terms of assembly, homodimer. Requires FMN as cofactor.

The enzyme catalyses pyridoxamine 5'-phosphate + O2 + H2O = pyridoxal 5'-phosphate + H2O2 + NH4(+). The catalysed reaction is pyridoxine 5'-phosphate + O2 = pyridoxal 5'-phosphate + H2O2. Its pathway is cofactor metabolism; pyridoxal 5'-phosphate salvage; pyridoxal 5'-phosphate from pyridoxamine 5'-phosphate: step 1/1. It functions in the pathway cofactor metabolism; pyridoxal 5'-phosphate salvage; pyridoxal 5'-phosphate from pyridoxine 5'-phosphate: step 1/1. In terms of biological role, catalyzes the oxidation of either pyridoxine 5'-phosphate (PNP) or pyridoxamine 5'-phosphate (PMP) into pyridoxal 5'-phosphate (PLP). The protein is Pyridoxine/pyridoxamine 5'-phosphate oxidase of Paracoccus denitrificans (strain Pd 1222).